The following is a 324-amino-acid chain: CYFIP-related Rac1 interactor B (324 aa).

G2 is lipidated: N-myristoyl glycine. Residue K74 forms a Glycyl lysine isopeptide (Lys-Gly) (interchain with G-Cter in ubiquitin) linkage.

The protein belongs to the CYRI family. As to quaternary structure, interacts with RAC1 (GTP-bound form preferentially). Post-translationally, ubiquitinated at Lys-74 upon Salmonella bacterial infection.

It is found in the membrane. The protein resides in the mitochondrion. Its function is as follows. Negatively regulates RAC1 signaling and RAC1-driven cytoskeletal remodeling. Regulates chemotaxis, cell migration and epithelial polarization by controlling the polarity, plasticity, duration and extent of protrusions. Limits Rac1 mediated activation of the Scar/WAVE complex, focuses protrusion signals and regulates pseudopod complexity by inhibiting Scar/WAVE-induced actin polymerization. Protects against Salmonella bacterial infection. Attenuates processes such as macropinocytosis, phagocytosis and cell migration and restrict sopE-mediated bacterial entry. Also restricts infection mediated by Mycobacterium tuberculosis and Listeria monocytogenes. Involved in the regulation of mitochondrial dynamics and oxidative stress. The chain is CYFIP-related Rac1 interactor B from Homo sapiens (Human).